A 360-amino-acid polypeptide reads, in one-letter code: Probable cinnamyl alcohol dehydrogenase 9 (360 aa).

C50 contributes to the Zn(2+) binding site. T52 contributes to the NADP(+) binding site. Zn(2+) is bound by residues H72, E73, C103, C106, C109, C117, and C166. Residues T170, 191 to 196 (GLGGLG), 214 to 219 (SSSSTK), T254, G278, and 301 to 303 (SDV) contribute to the NADP(+) site.

It belongs to the zinc-containing alcohol dehydrogenase family. Homodimer. Requires Zn(2+) as cofactor. As to expression, expressed in the vasculature of the primary root and elongation regions. Expressed in the hypocotyl, cotyledon veins, vasculature of the first rosette leaves, and hydathodes. In stems, expressed in the vascular cambium, interfascicular cambium, developing xylem, and phloem. Expressed in the entire floral organs at late developing stage, and in the abscission, style and stigmatic regions of siliques and seed funicules.

The enzyme catalyses (E)-cinnamyl alcohol + NADP(+) = (E)-cinnamaldehyde + NADPH + H(+). Its pathway is aromatic compound metabolism; phenylpropanoid biosynthesis. Involved in lignin biosynthesis. May catalyze the final step specific for the production of lignin monomers, like coniferyl alcohol, sinapyl alcohol and 4-coumaryl alcohol. This is Probable cinnamyl alcohol dehydrogenase 9 (CAD9) from Arabidopsis thaliana (Mouse-ear cress).